Reading from the N-terminus, the 37-residue chain is MKIRASVRKICDKCRLIRRRRRIMIVCSNPKHKQRQG.

It belongs to the bacterial ribosomal protein bL36 family.

Its subcellular location is the plastid. The protein localises to the chloroplast. This is Large ribosomal subunit protein bL36c from Huperzia lucidula (Shining clubmoss).